We begin with the raw amino-acid sequence, 160 residues long: Cytochrome b6-f complex subunit 4 (160 aa).

3 helical membrane passes run 36–56, 95–115, and 131–151; these read LLYI…GLAV, LLGI…PFIE, and SLFL…CLPI.

The protein belongs to the cytochrome b family. PetD subfamily. The 4 large subunits of the cytochrome b6-f complex are cytochrome b6, subunit IV (17 kDa polypeptide, PetD), cytochrome f and the Rieske protein, while the 4 small subunits are PetG, PetL, PetM and PetN. The complex functions as a dimer.

The protein localises to the cellular thylakoid membrane. In terms of biological role, component of the cytochrome b6-f complex, which mediates electron transfer between photosystem II (PSII) and photosystem I (PSI), cyclic electron flow around PSI, and state transitions. The polypeptide is Cytochrome b6-f complex subunit 4 (Prochlorococcus marinus (strain NATL2A)).